Reading from the N-terminus, the 650-residue chain is MICOS complex subunit MIC60, mitochondrial (650 aa).

The N-terminal 34 residues, 1-34, are a transit peptide targeting the mitochondrion; sequence MLRKSVLELSSRLSIKRFPRNLGAQRFHLSSSRN. A disordered region spans residues 26–74; the sequence is RFHLSSSRNASTSGKNGLPGAKPVGKPDASKVDPPKVTPPPPTKGNSSK. The span at 28–40 shows a compositional bias: polar residues; the sequence is HLSSSRNASTSGK. Residues 35–74 are Mitochondrial matrix-facing; it reads ASTSGKNGLPGAKPVGKPDASKVDPPKVTPPPPTKGNSSK. A helical membrane pass occupies residues 75–95; the sequence is VVIGGVAIAGAFLVAYQTGYL. The Mitochondrial intermembrane segment spans residues 96–549; the sequence is DQYLGKEQQK…FDTLKGTLRH (454 aa). 3 disordered regions span residues 121-168, 239-267, and 284-304; these read EAHH…ESDL, QSSSVHRESETESASPKDPAALKTPEDGI, and EGSDTESTGSSSIGEQITKET. Low complexity predominate over residues 284–299; that stretch reads EGSDTESTGSSSIGEQ. 2 coiled-coil regions span residues 345–369 and 396–430; these read AQVFAEELRALKEKYENELRDLRAR and KAIQERMEDKLKAELEQKETEAQLALSKAEELAKA. A helical transmembrane segment spans residues 550 to 570; the sequence is FSLIPPGGGGILAHSLAHVAS. Residues 571 to 650 are Mitochondrial matrix-facing; that stretch reads SLKFKEVDQA…QSYATCVSLT (80 aa).

This sequence belongs to the MICOS complex subunit Mic60 family. Component of the mitochondrial contact site and cristae organizing system (MICOS) complex. The MICOS complex associates with mitochondrial outer membrane proteins. Present in a large lipid-enriched complex called mitochondrial transmembrane lipoprotein (MTL) complex made of proteins located in the two mitochondrial membranes, including the TOM complex and the core components of the MICOS complex and containing at least digalactosyldiacylglycerol (DGDG). Binds to TOM40-1. Component of a mitochondrial large protein complex that contains, at least, MIC60, DGS1, TOM40, TOM20 proteins, and petC/RISP.

It localises to the mitochondrion inner membrane. Functionally, component of the MICOS complex, a large protein complex of the mitochondrial inner membrane that plays crucial roles in the maintenance of crista junctions, inner membrane architecture, and formation of contact sites to the outer membrane. Plays a role in keeping cristae membranes connected to the inner boundary membrane. Also promotes protein import via the mitochondrial intermembrane space assembly (MIA) pathway. Involved in the maintenance of mitochondria morphology. Binds to glycerolipids such as cardiolipin (CL). Contributes to the export of phosphatidylethanolamine (PE) from mitochondria and to the import of galactoglycerolipids from plastids during phosphate (Pi) starvation. Promotes lipid desorption from membranes, likely as an initial step for lipid transfer, and regulates probably the tethering between the inner and outer membranes of mitochondria by binding to TOM40 proteins. The sequence is that of MICOS complex subunit MIC60, mitochondrial from Arabidopsis thaliana (Mouse-ear cress).